Here is a 342-residue protein sequence, read N- to C-terminus: Phosphoribosylformylglycinamidine cyclo-ligase (342 aa).

It belongs to the AIR synthase family.

The protein resides in the cytoplasm. The enzyme catalyses 2-formamido-N(1)-(5-O-phospho-beta-D-ribosyl)acetamidine + ATP = 5-amino-1-(5-phospho-beta-D-ribosyl)imidazole + ADP + phosphate + H(+). Its pathway is purine metabolism; IMP biosynthesis via de novo pathway; 5-amino-1-(5-phospho-D-ribosyl)imidazole from N(2)-formyl-N(1)-(5-phospho-D-ribosyl)glycinamide: step 2/2. In Staphylococcus aureus (strain Mu3 / ATCC 700698), this protein is Phosphoribosylformylglycinamidine cyclo-ligase.